The following is a 349-amino-acid chain: GMP reductase (349 aa).

108–131 contacts NADP(+); the sequence is LDFFKIKKIFSLSSELKYICIDVA. K(+) contacts are provided by Gly-181 and Gly-183. The Thioimidate intermediate role is filled by Cys-186. 216 to 239 is an NADP(+) binding site; that stretch reads IISDGGCTVSGDIAKAFGGGADFV.

Belongs to the IMPDH/GMPR family. GuaC type 1 subfamily. As to quaternary structure, homotetramer.

It catalyses the reaction IMP + NH4(+) + NADP(+) = GMP + NADPH + 2 H(+). In terms of biological role, catalyzes the irreversible NADPH-dependent deamination of GMP to IMP. It functions in the conversion of nucleobase, nucleoside and nucleotide derivatives of G to A nucleotides, and in maintaining the intracellular balance of A and G nucleotides. The polypeptide is GMP reductase (Buchnera aphidicola subsp. Schizaphis graminum (strain Sg)).